Here is a 173-residue protein sequence, read N- to C-terminus: Small ribosomal subunit protein uS5 (173 aa).

An S5 DRBM domain is found at 17–80 (WQERVIQIRR…ADGKKQLIDV (64 aa)).

It belongs to the universal ribosomal protein uS5 family. As to quaternary structure, part of the 30S ribosomal subunit. Contacts proteins S4 and S8.

Functionally, with S4 and S12 plays an important role in translational accuracy. Its function is as follows. Located at the back of the 30S subunit body where it stabilizes the conformation of the head with respect to the body. The chain is Small ribosomal subunit protein uS5 from Crocosphaera subtropica (strain ATCC 51142 / BH68) (Cyanothece sp. (strain ATCC 51142)).